A 362-amino-acid polypeptide reads, in one-letter code: MADEQFPAAATALEEYQSIEEQMASPEVVSNPDKLRKLGRRHAELGAIVGAYKTWLQVKDDLAAAQEMAGEDADFAEEAKRLEAELPGVEEKLRTALIPRDPDDARDTIMEIKAGTGGEEAALFAGDLLRMYTRYAEKRGWSVNVQSENTTELGGVKDVQIAIRAKGTPAPEDGVWASMKYEGGVHRVQRIPVTESQGRIQTSAAGVIVFPEADEDDDEIEIDPKDLKIDIFMSSGPGGQSVNTTYSAVRMTHLPTGITVNMQDEKSQIQNRAAALRVLKSRLLAMKHEQEAAEAADMRHSQVRSLDRSERIRTYNFPENRIVDHRTNYKAYNLDAVLDGDLQAVIDSDIQADEADRLANQQ.

N5-methylglutamine is present on Gln240.

This sequence belongs to the prokaryotic/mitochondrial release factor family. In terms of processing, methylated by PrmC. Methylation increases the termination efficiency of RF1.

It is found in the cytoplasm. Functionally, peptide chain release factor 1 directs the termination of translation in response to the peptide chain termination codons UAG and UAA. This Bifidobacterium longum subsp. infantis (strain ATCC 15697 / DSM 20088 / JCM 1222 / NCTC 11817 / S12) protein is Peptide chain release factor 1.